Here is a 105-residue protein sequence, read N- to C-terminus: Large ribosomal subunit protein uL24 (105 aa).

It belongs to the universal ribosomal protein uL24 family. Part of the 50S ribosomal subunit.

Its function is as follows. One of two assembly initiator proteins, it binds directly to the 5'-end of the 23S rRNA, where it nucleates assembly of the 50S subunit. Functionally, one of the proteins that surrounds the polypeptide exit tunnel on the outside of the subunit. This Mycolicibacterium smegmatis (strain ATCC 700084 / mc(2)155) (Mycobacterium smegmatis) protein is Large ribosomal subunit protein uL24.